A 246-amino-acid chain; its full sequence is UDP-N-acetyl-D-mannosaminuronic acid transferase (246 aa).

The protein belongs to the glycosyltransferase 26 family.

It catalyses the reaction UDP-N-acetyl-alpha-D-mannosaminouronate + N-acetyl-alpha-D-glucosaminyl-di-trans,octa-cis-undecaprenyl diphosphate = beta-D-ManNAcA-(1-&gt;4)-alpha-D-GlcNAc-di-trans,octa-cis-undecaprenyl diphosphate + UDP + H(+). Its pathway is bacterial outer membrane biogenesis; enterobacterial common antigen biosynthesis. Functionally, catalyzes the synthesis of Und-PP-GlcNAc-ManNAcA (Lipid II), the second lipid-linked intermediate involved in enterobacterial common antigen (ECA) synthesis. This is UDP-N-acetyl-D-mannosaminuronic acid transferase from Salmonella agona (strain SL483).